Reading from the N-terminus, the 349-residue chain is Ribosomal RNA small subunit methyltransferase H (349 aa).

S-adenosyl-L-methionine contacts are provided by residues 34-36, aspartate 54, phenylalanine 81, aspartate 102, and glutamine 109; that span reads GGH.

This sequence belongs to the methyltransferase superfamily. RsmH family.

The protein localises to the cytoplasm. It catalyses the reaction cytidine(1402) in 16S rRNA + S-adenosyl-L-methionine = N(4)-methylcytidine(1402) in 16S rRNA + S-adenosyl-L-homocysteine + H(+). Functionally, specifically methylates the N4 position of cytidine in position 1402 (C1402) of 16S rRNA. This Dehalococcoides mccartyi (strain ATCC BAA-2266 / KCTC 15142 / 195) (Dehalococcoides ethenogenes (strain 195)) protein is Ribosomal RNA small subunit methyltransferase H.